Reading from the N-terminus, the 359-residue chain is Centromere-binding protein 1 (359 aa).

The tract at residues 1–262 (MSGKRSYQDD…SHKEVERRRR (262 aa)) is disordered. The segment covering 55-78 (KENKENRDGDKVGDDEHDVVKGES) has biased composition (basic and acidic residues). Acidic residues predominate over residues 120 to 161 (GDEDEDEDEEEEEDEDDHVDIDDVDKDPDAVIDEDDDEEDED). The segment covering 249–259 (QRKESHKEVER) has biased composition (basic and acidic residues). Positions 249–297 (QRKESHKEVERRRRQNINTAIEKLSDLLPVKETSKAAILSRAAEYIQKM) constitute a bHLH domain.

In terms of assembly, binds DNA as a dimer.

Its subcellular location is the nucleus. The protein resides in the chromosome. It is found in the centromere. In terms of biological role, required for chromosome stability and methionine prototrophy. It is involved in chromosomal segregation. Binds to a highly conserved DNA sequence (5'-RTCACRTG-3'), called CDEI, found in centromeres and in several promoters. The protein is Centromere-binding protein 1 (CBF1) of Kluyveromyces lactis (strain ATCC 8585 / CBS 2359 / DSM 70799 / NBRC 1267 / NRRL Y-1140 / WM37) (Yeast).